We begin with the raw amino-acid sequence, 1775 residues long: Atrochrysone carboxylic acid synthase (1775 aa).

Positions 35–262 (LRRLQALSKD…YAKWASLPIF (228 aa)) constitute a Starter acyltransferase (SAT) domain. The Ketosynthase family 3 (KS3) domain occupies 400-833 (DSKIAIVGMS…GGNTTMLLEE (434 aa)). Active-site for beta-ketoacyl synthase activity residues include Cys573, His708, and His750. A Malonyl-CoA:ACP transacylase (MAT) domain is found at 934–1244 (FAFTGQGAFY…ENNWNTLADS (311 aa)). Positions 1313-1631 (TSSIHQVLQE…RSLLPTFFSP (319 aa)) are product template (PT) domain. The interval 1317 to 1451 (HQVLQEDVTG…SAVVEYGDAN (135 aa)) is N-terminal hotdog fold. Residues 1317-1626 (HQVLQEDVTG…FRRFPRSLLP (310 aa)) form the PKS/mFAS DH domain. His1349 functions as the Proton acceptor; for dehydratase activity in the catalytic mechanism. The C-terminal hotdog fold stretch occupies residues 1480–1626 (AAVLPRNMAY…FRRFPRSLLP (147 aa)). Asp1537 acts as the Proton donor; for dehydratase activity in catalysis. The segment at 1671–1697 (TAAPVPAPAPVPAKRAEPAPAAAQAAA) is disordered. Positions 1688–1697 (PAPAAAQAAA) are enriched in low complexity. In terms of domain architecture, Carrier spans 1697 to 1774 (ATQNPTITGA…ELKTYIEETF (78 aa)). Ser1734 is modified (O-(pantetheine 4'-phosphoryl)serine).

The catalysed reaction is holo-[ACP] + 8 malonyl-CoA + 8 H(+) = atrochrysone carboxyl-[ACP] + 8 CO2 + 8 CoA + 2 H2O. It functions in the pathway secondary metabolite biosynthesis. Non-reducing polyketide synthase; part of the gene cluster that mediates the biosynthesis of physcion, a natural anthraquinone fungicide that can prevent plant fungal infections. The pathway begins with the polyketide synthase AcPKS that condenses 8 malonyl-CoA units to synthesize atrochrysone thioester which is released from the synthase by the atrochrysone carboxyl ACP thioesterase AcTE that breaks the thioester bond and leads to free atrochrysone carboxylic acid. Spontaneous decarboxylation of atrochrysone carboxylic acid leads to the formation of atrochrysone. Then, atrochrysone undergoes spontaneous dehydration and oxidation, giving the products emodin anthrone and emodin. The O-methyltransferase AcOMT then methylates the C-6 hydroxyl of emodin to form physcion. The sequence is that of Atrochrysone carboxylic acid synthase from Aspergillus chevalieri (Eurotium chevalieri).